A 599-amino-acid chain; its full sequence is 1-deoxy-D-xylulose-5-phosphate synthase (599 aa).

Thiamine diphosphate contacts are provided by residues H63 and 104–106; that span reads GHS. D135 contacts Mg(2+). Residues 136 to 137, N164, Y271, and E352 each bind thiamine diphosphate; that span reads GA. A Mg(2+)-binding site is contributed by N164.

This sequence belongs to the transketolase family. DXPS subfamily. In terms of assembly, homodimer. Mg(2+) serves as cofactor. The cofactor is thiamine diphosphate.

It carries out the reaction D-glyceraldehyde 3-phosphate + pyruvate + H(+) = 1-deoxy-D-xylulose 5-phosphate + CO2. The protein operates within metabolic intermediate biosynthesis; 1-deoxy-D-xylulose 5-phosphate biosynthesis; 1-deoxy-D-xylulose 5-phosphate from D-glyceraldehyde 3-phosphate and pyruvate: step 1/1. Functionally, catalyzes the acyloin condensation reaction between C atoms 2 and 3 of pyruvate and glyceraldehyde 3-phosphate to yield 1-deoxy-D-xylulose-5-phosphate (DXP). The polypeptide is 1-deoxy-D-xylulose-5-phosphate synthase (Nitratiruptor sp. (strain SB155-2)).